The primary structure comprises 334 residues: Protein-methionine-sulfoxide reductase catalytic subunit MsrP (334 aa).

The segment at residues 1 to 44 (MKKNQFLKESDVTAESVFFMKRRQVLKALGISAAAFSLPHAAHA) is a signal peptide (tat-type signal). Mo-molybdopterin is bound by residues asparagine 88, 91 to 92 (YE), cysteine 146, threonine 181, asparagine 233, arginine 238, and 249 to 251 (GIK).

It belongs to the MsrP family. As to quaternary structure, heterodimer of a catalytic subunit (MsrP) and a heme-binding subunit (MsrQ). Mo-molybdopterin serves as cofactor. Predicted to be exported by the Tat system. The position of the signal peptide cleavage has not been experimentally proven.

The protein localises to the periplasm. The enzyme catalyses L-methionyl-[protein] + a quinone + H2O = L-methionyl-(S)-S-oxide-[protein] + a quinol. It carries out the reaction L-methionyl-[protein] + a quinone + H2O = L-methionyl-(R)-S-oxide-[protein] + a quinol. Its function is as follows. Part of the MsrPQ system that repairs oxidized periplasmic proteins containing methionine sulfoxide residues (Met-O), using respiratory chain electrons. Thus protects these proteins from oxidative-stress damage caused by reactive species of oxygen and chlorine generated by the host defense mechanisms. MsrPQ is essential for the maintenance of envelope integrity under bleach stress, rescuing a wide series of structurally unrelated periplasmic proteins from methionine oxidation, including the primary periplasmic chaperone SurA and the lipoprotein Pal. The catalytic subunit MsrP is non-stereospecific, being able to reduce both (R-) and (S-) diastereoisomers of methionine sulfoxide. The polypeptide is Protein-methionine-sulfoxide reductase catalytic subunit MsrP (Escherichia coli O6:H1 (strain CFT073 / ATCC 700928 / UPEC)).